Here is a 417-residue protein sequence, read N- to C-terminus: Gamma-glutamyl phosphate reductase (417 aa).

The protein belongs to the gamma-glutamyl phosphate reductase family.

The protein localises to the cytoplasm. The catalysed reaction is L-glutamate 5-semialdehyde + phosphate + NADP(+) = L-glutamyl 5-phosphate + NADPH + H(+). Its pathway is amino-acid biosynthesis; L-proline biosynthesis; L-glutamate 5-semialdehyde from L-glutamate: step 2/2. Functionally, catalyzes the NADPH-dependent reduction of L-glutamate 5-phosphate into L-glutamate 5-semialdehyde and phosphate. The product spontaneously undergoes cyclization to form 1-pyrroline-5-carboxylate. The polypeptide is Gamma-glutamyl phosphate reductase (Shigella boydii serotype 18 (strain CDC 3083-94 / BS512)).